Here is a 66-residue protein sequence, read N- to C-terminus: Large ribosomal subunit protein bL33c (66 aa).

It belongs to the bacterial ribosomal protein bL33 family.

Its subcellular location is the plastid. It is found in the chloroplast. The polypeptide is Large ribosomal subunit protein bL33c (Daucus carota (Wild carrot)).